The following is a 379-amino-acid chain: Homoserine O-succinyltransferase (379 aa).

One can recognise an AB hydrolase-1 domain in the interval 51–360; it reads NAVLICHALS…DSPYGHDAFL (310 aa). Serine 157 acts as the Nucleophile in catalysis. Substrate is bound at residue arginine 227. Catalysis depends on residues aspartate 323 and histidine 356. Aspartate 357 serves as a coordination point for substrate.

The protein belongs to the AB hydrolase superfamily. MetX family. Homodimer.

It is found in the cytoplasm. It carries out the reaction L-homoserine + succinyl-CoA = O-succinyl-L-homoserine + CoA. It functions in the pathway amino-acid biosynthesis; L-methionine biosynthesis via de novo pathway; O-succinyl-L-homoserine from L-homoserine: step 1/1. Its function is as follows. Transfers a succinyl group from succinyl-CoA to L-homoserine, forming succinyl-L-homoserine. The polypeptide is Homoserine O-succinyltransferase (Pseudomonas putida (strain GB-1)).